A 36-amino-acid polypeptide reads, in one-letter code: Cecropin-D (36 aa).

Position 36 is a lysine amide (Lys36).

This sequence belongs to the cecropin family.

It localises to the secreted. Functionally, cecropins have lytic and antibacterial activity against several Gram-positive and Gram-negative bacteria. The sequence is that of Cecropin-D from Antheraea pernyi (Chinese oak silk moth).